Reading from the N-terminus, the 118-residue chain is MRIKLSVNSEKCRKKAMQVAVAADGVTSVAMEGEFQDELVVVGDGVDSASLIMALRKKACHVTLETLEEVKKPQVEEKSITPHCCIAQCPVVSNEQPRPEVYRIVHDSYGPTTGCLVM.

Positions M1–L67 constitute an HMA domain. Position 115 is a cysteine methyl ester (C115). A lipid anchor (S-farnesyl cysteine) is attached at C115. Positions L116 to M118 are cleaved as a propeptide — removed in mature form.

Belongs to the HIPP family.

Its function is as follows. Heavy-metal-binding protein. This chain is Heavy metal-associated isoprenylated plant protein 47, found in Arabidopsis thaliana (Mouse-ear cress).